A 374-amino-acid polypeptide reads, in one-letter code: Peptidoglycan recognition protein 4 (374 aa).

A signal peptide spans 1–20 (MLSWLLVFSILVLLAQGVSS). N-linked (GlcNAc...) asparagine glycans are attached at residues Asn39, Asn93, and Asn146. 2 N-acetylmuramoyl-L-alanine amidase domains span residues 76–212 (RPVD…KACP) and 233–359 (PAKY…LSPG). Disulfide bonds link Cys211–Cys333, Cys227–Cys271, and Cys247–Cys253. Residue Tyr275 participates in peptidoglycan binding. 2 interaction with murein regions span residues 294–303 (QGSKTDSYND) and 354–355 (NT).

It belongs to the N-acetylmuramoyl-L-alanine amidase 2 family. As to quaternary structure, homodimer; disulfide-linked. Heterodimer with PGLYRP3; disulfide-linked. In terms of tissue distribution, ubiquitous.

The protein resides in the secreted. In terms of biological role, pattern receptor that binds to murein peptidoglycans (PGN) of Gram-positive bacteria. Has bactericidal activity towards Gram-positive bacteria. May kill Gram-positive bacteria by interfering with peptidoglycan biosynthesis. Also binds to Gram-negative bacteria, and has bacteriostatic activity towards Gram-negative bacteria. Plays a role in innate immunity. This chain is Peptidoglycan recognition protein 4 (Pglyrp4), found in Mus musculus (Mouse).